A 1374-amino-acid polypeptide reads, in one-letter code: Ribonuclease 3 (1374 aa).

Disordered regions lie at residues M1–P95, P130–E406, and L452–S497. The segment covering P59–A68 has biased composition (polar residues). 2 stretches are compositionally biased toward pro residues: residues N70–P95 and M145–M160. Residues F182–P202 are compositionally biased toward low complexity. Basic and acidic residues-rich tracts occupy residues P216–R289 and R298–R313. 2 positions are modified to phosphoserine: S355 and S373. The segment covering R364–K399 has biased composition (basic and acidic residues). The interval K390–E1365 is necessary for interaction with DGCR8 and pri-miRNA processing activity. Positions E475–S491 are enriched in acidic residues. Residues C536, C538, H549, C561, H609, C676, and H680 each contribute to the Zn(2+) site. RNase III domains follow at residues L876–S1056 and L1107–D1233. Mg(2+) is bound at residue E969. Residue H1026 coordinates Zn(2+). Residues N1042, E1045, E1147, D1219, and E1222 each contribute to the Mg(2+) site. Residues D1260–F1334 form the DRBM domain.

It belongs to the ribonuclease III family. As to quaternary structure, component of the microprocessor complex, or pri-miRNA processing protein complex, which is composed of DROSHA and DGCR8. The microprocessor complex is a heterotrimer; each of the two DROSHA RNase III domains binds one DGCR8 (via C-terminal region). Interacts with SP1 and SNIP1. Interacts with SRRT/ARS2. Interacts with CPSF3 and ISY1; this interaction is in an RNA dependent manner. Interacts with PUS10; interaction promotes pri-miRNAs processing. Mg(2+) is required as a cofactor. Mn(2+) serves as cofactor. Post-translationally, degraded by autophagy in response to neuronal activity in motor neurons. In terms of tissue distribution, ubiquitous.

Its subcellular location is the nucleus. The protein localises to the nucleolus. It is found in the cytoplasm. The enzyme catalyses Endonucleolytic cleavage to 5'-phosphomonoester.. In terms of biological role, ribonuclease III double-stranded (ds) RNA-specific endoribonuclease that is involved in the initial step of microRNA (miRNA) biogenesis. Component of the microprocessor complex that is required to process primary miRNA transcripts (pri-miRNAs) to release precursor miRNA (pre-miRNA) in the nucleus. Within the microprocessor complex, DROSHA cleaves the 3' and 5' strands of a stem-loop in pri-miRNAs (processing center 11 bp from the dsRNA-ssRNA junction) to release hairpin-shaped pre-miRNAs that are subsequently cut by the cytoplasmic DICER to generate mature miRNAs. Involved also in pre-rRNA processing. Cleaves double-strand RNA and does not cleave single-strand RNA. Involved in the formation of GW bodies. Plays a role in growth homeostasis in response to autophagy in motor neurons. This is Ribonuclease 3 (DROSHA) from Homo sapiens (Human).